The primary structure comprises 550 residues: MSEQSTLAGPYTEKPGVESQNPTGDGKASFDETSPRDIHGWRWAIAYAAMLSTTFLFALDNTIVANIQPSIINDFGHLELISWIGTGFALGTMFILLWGKIYGVFNIKWVYIFNILLFEVGSAVCGAAPNIQALIIGRVIAGIGGSGMYSGTLTYVSVLSNQKEKPAYLAGSTVVWGVGSVVGPVVGGAFAASSATWRWGFYINLPIGAVFAPAYMILFPNWDPNPTLTLAEKFRLVDWINAVIFLAGSACLTVALTFGGVVYSFNSGTIIALWTVTGVLLVAFIVLLKLHPLVSKENRLYPLHFFKQMTLINMQLQVFLASGIILAMTYYVPLYFQFIKGDGALQAGVRLLPLIMFMVAFSMVNGFLMPKYGLIPIWYIVGSALTLIGSALMYTIDENTSNGNVYGYNILVGAGAGCYIVAGFAIVQSLVPTHEIANAVGAMTISQDLGMVLFLAICGSLFHNVAVDKVGKALPSASETEIGNLIAGTSSSAFQALSEADKDLVIPEIASAMKSIWAFFMAAAALSFVCSWPLFKTKLGGKKVEASVVV.

A disordered region spans residues 1–33 (MSEQSTLAGPYTEKPGVESQNPTGDGKASFDET). 11 consecutive transmembrane segments (helical) span residues 44–64 (AIAYAAMLSTTFLFALDNTIV), 78–98 (LELISWIGTGFALGTMFILLW), 109–129 (WVYIFNILLFEVGSAVCGAAP), 139–159 (VIAGIGGSGMYSGTLTYVSVL), 172–192 (STVVWGVGSVVGPVVGGAFAA), 199–219 (WGFYINLPIGAVFAPAYMILF), 242–262 (AVIFLAGSACLTVALTFGGVV), 268–288 (GTIIALWTVTGVLLVAFIVLL), 319–339 (FLASGIILAMTYYVPLYFQFI), 351–371 (LLPLIMFMVAFSMVNGFLMPK), and 373–393 (GLIPIWYIVGSALTLIGSALM). Residue asparagine 399 is glycosylated (N-linked (GlcNAc...) asparagine). Helical transmembrane passes span 410 to 430 (ILVGAGAGCYIVAGFAIVQSL), 439 to 459 (AVGAMTISQDLGMVLFLAICG), and 515 to 535 (SIWAFFMAAAALSFVCSWPLF).

It belongs to the major facilitator superfamily. TCR/Tet family.

It is found in the cell membrane. Efflux pump; part of the gene cluster that mediates the biosynthesis of depudecin, a highly oxidized eleven-carbon linear polyketide that acts as a histone deacetylase (HDAC) inhibitor and makes a small contribution to pathogenesis. Is presumed either to be responsible for exporting depudecin, to provide self-protection, or both. This chain is Efflux pump DEP3, found in Fusarium langsethiae.